Consider the following 192-residue polypeptide: Fe/S biogenesis protein NfuA (192 aa).

[4Fe-4S] cluster is bound by residues Cys149 and Cys152.

Belongs to the NfuA family. Homodimer. Requires [4Fe-4S] cluster as cofactor.

In terms of biological role, involved in iron-sulfur cluster biogenesis. Binds a 4Fe-4S cluster, can transfer this cluster to apoproteins, and thereby intervenes in the maturation of Fe/S proteins. Could also act as a scaffold/chaperone for damaged Fe/S proteins. This Shewanella pealeana (strain ATCC 700345 / ANG-SQ1) protein is Fe/S biogenesis protein NfuA.